The chain runs to 162 residues: uncharacterized protein (162 aa).

Positions 1-23 (MAQLPLSPAPQRPETKTPGKPEA) are disordered. The segment covering 13 to 23 (PETKTPGKPEA) has biased composition (basic and acidic residues).

This is an uncharacterized protein from Rhodobacter capsulatus (Rhodopseudomonas capsulata).